Reading from the N-terminus, the 301-residue chain is Small ribosomal subunit protein uS2 (301 aa).

It belongs to the universal ribosomal protein uS2 family.

In Acidobacterium capsulatum (strain ATCC 51196 / DSM 11244 / BCRC 80197 / JCM 7670 / NBRC 15755 / NCIMB 13165 / 161), this protein is Small ribosomal subunit protein uS2.